A 137-amino-acid chain; its full sequence is Chaperone protein YscB (137 aa).

As to quaternary structure, interacts with SycN to form a complex which specifically binds to YopN.

The protein resides in the cytoplasm. It localises to the cell inner membrane. In terms of biological role, functions as a specific chaperone for YopN. It could facilitate the secretion and the subsequent translocation of YopN. This Yersinia pestis protein is Chaperone protein YscB (yscB).